The primary structure comprises 207 residues: Large ribosomal subunit protein uL4 (207 aa).

The tract at residues 50–76 (AVKNRSAVSGGGRKPWKQKGTGRARQG) is disordered.

The protein belongs to the universal ribosomal protein uL4 family. As to quaternary structure, part of the 50S ribosomal subunit.

Its function is as follows. One of the primary rRNA binding proteins, this protein initially binds near the 5'-end of the 23S rRNA. It is important during the early stages of 50S assembly. It makes multiple contacts with different domains of the 23S rRNA in the assembled 50S subunit and ribosome. Forms part of the polypeptide exit tunnel. This is Large ribosomal subunit protein uL4 from Macrococcus caseolyticus (strain JCSC5402) (Macrococcoides caseolyticum).